Here is a 211-residue protein sequence, read N- to C-terminus: Suppressor of RNA silencing p3 (211 aa).

The protein belongs to the tenuiviruses p3 protein family. As to quaternary structure, homodimer.

Its subcellular location is the host cytoplasm. Acts as a suppressor of RNA-mediated gene silencing, also known as post-transcriptional gene silencing (PTGS), presumably through the binding of dsRNA. This is Suppressor of RNA silencing p3 from Avena sativa (Oat).